We begin with the raw amino-acid sequence, 554 residues long: Thermosome subunit beta (554 aa).

The segment at 532-554 is disordered; that stretch reads GKKSGSEPSGKKEKDKEEKSSED. Basic and acidic residues predominate over residues 540-554; sequence SGKKEKDKEEKSSED.

It belongs to the TCP-1 chaperonin family. In terms of assembly, forms a Heterooligomeric complex of two stacked eight-membered rings.

In terms of biological role, molecular chaperone; binds unfolded polypeptides in vitro, and has a weak ATPase activity. This chain is Thermosome subunit beta (thsB), found in Saccharolobus solfataricus (strain ATCC 35092 / DSM 1617 / JCM 11322 / P2) (Sulfolobus solfataricus).